A 122-amino-acid chain; its full sequence is Large ribosomal subunit protein uL14 (122 aa).

Belongs to the universal ribosomal protein uL14 family. In terms of assembly, part of the 50S ribosomal subunit. Forms a cluster with proteins L3 and L19. In the 70S ribosome, L14 and L19 interact and together make contacts with the 16S rRNA in bridges B5 and B8.

Binds to 23S rRNA. Forms part of two intersubunit bridges in the 70S ribosome. The protein is Large ribosomal subunit protein uL14 of Dehalococcoides mccartyi (strain ATCC BAA-2100 / JCM 16839 / KCTC 5957 / BAV1).